We begin with the raw amino-acid sequence, 280 residues long: Probable endonuclease 4 (280 aa).

Zn(2+)-binding residues include H69, H109, E145, D179, H182, H216, D229, H231, and E261.

This sequence belongs to the AP endonuclease 2 family. Zn(2+) serves as cofactor.

The catalysed reaction is Endonucleolytic cleavage to 5'-phosphooligonucleotide end-products.. Functionally, endonuclease IV plays a role in DNA repair. It cleaves phosphodiester bonds at apurinic or apyrimidinic (AP) sites, generating a 3'-hydroxyl group and a 5'-terminal sugar phosphate. The sequence is that of Probable endonuclease 4 from Aliarcobacter butzleri (strain RM4018) (Arcobacter butzleri).